A 287-amino-acid polypeptide reads, in one-letter code: uncharacterized protein (287 aa).

This is an uncharacterized protein from Methanocaldococcus jannaschii (strain ATCC 43067 / DSM 2661 / JAL-1 / JCM 10045 / NBRC 100440) (Methanococcus jannaschii).